The following is a 366-amino-acid chain: Isocitrate dehydrogenase [NAD] subunit alpha, mitochondrial (366 aa).

A mitochondrion-targeting transit peptide spans 1–27 (MAGPAWISKVSRLLGAFHNQKQVTRGF). The residue at position 77 (K77) is an N6-succinyllysine. A Phosphothreonine modification is found at T101. Residues R115, R125, and R146 each contribute to the substrate site. K223 carries the post-translational modification N6-acetyllysine. 3 residues coordinate Mg(2+): D233, D257, and D261. K343 is subject to N6-acetyllysine; alternate. K343 bears the N6-succinyllysine; alternate mark. N6-succinyllysine is present on K350.

This sequence belongs to the isocitrate and isopropylmalate dehydrogenases family. As to quaternary structure, heterooligomer of subunits alpha (IDH3A), beta (IDH3B), and gamma (IDH3G) in the apparent ratio of 2:1:1. The heterodimer containing one IDH3A and one IDH3B subunit and the heterodimer containing one IDH3A and one IDH3G subunit assemble into a heterotetramer (which contains two subunits of IDH3A, one of IDH3B and one of IDH3G) and further into the heterooctamer. The cofactor is Mg(2+). Mn(2+) is required as a cofactor.

The protein resides in the mitochondrion. It catalyses the reaction D-threo-isocitrate + NAD(+) = 2-oxoglutarate + CO2 + NADH. Its activity is regulated as follows. The heterotetramer and the heterodimer composed of IDH3A and IDH3G subunits can be allosterically activated by citrate (CIT) or/and ADP, and the two activators can act independently or synergistically. The heterodimer composed of IDH3A and IDH3B subunits cannot be allosterically regulated and the allosteric regulation of the heterotetramer is through the IDH3G subunit and not the IDH3B subunit. The IDH3G subunit contains the allosteric site which consists of a CIT-binding site and an ADP-binding site, and the binding of CIT and ADP causes conformational changes at the allosteric site which are transmitted to the active site in the catalytic subunit (IDH3A) through a cascade of conformational changes at the heterodimer interface, leading to stabilization of the isocitrate-binding at the active site and thus activation of the enzyme. ATP can activate the heterotetramer and the heterodimer composed of IDH3A and IDH3G subunits at low concentrations but inhibits their activities at high concentrations, whereas ATP exhibits only inhibitory effect on the heterodimer composed of IDH3A and IDH3B subunits. Its function is as follows. Catalytic subunit of the enzyme which catalyzes the decarboxylation of isocitrate (ICT) into alpha-ketoglutarate. The heterodimer composed of the alpha (IDH3A) and beta (IDH3B) subunits and the heterodimer composed of the alpha (IDH3A) and gamma (IDH3G) subunits, have considerable basal activity but the full activity of the heterotetramer (containing two subunits of IDH3A, one of IDH3B and one of IDH3G) requires the assembly and cooperative function of both heterodimers. The protein is Isocitrate dehydrogenase [NAD] subunit alpha, mitochondrial of Bos taurus (Bovine).